A 423-amino-acid chain; its full sequence is UPF0229 protein PLES_05841 (423 aa).

Positions 84–107 (AGEHIARPSGGGGGRGGGKASNSG) are disordered. The span at 92–102 (SGGGGGRGGGK) shows a compositional bias: gly residues.

The protein belongs to the UPF0229 family.

In Pseudomonas aeruginosa (strain LESB58), this protein is UPF0229 protein PLES_05841.